We begin with the raw amino-acid sequence, 183 residues long: 2-C-methyl-D-erythritol 2,4-cyclodiphosphate synthase (183 aa).

Asp8 and His10 together coordinate a divalent metal cation. 4-CDP-2-C-methyl-D-erythritol 2-phosphate-binding positions include 8–10 (DVH) and 34–35 (HS). Residue His42 coordinates a divalent metal cation. 4-CDP-2-C-methyl-D-erythritol 2-phosphate is bound by residues 56 to 58 (DIG), 61 to 65 (FPDTD), 132 to 135 (TTEE), and Phe139.

It belongs to the IspF family. In terms of assembly, homotrimer. A divalent metal cation is required as a cofactor.

It carries out the reaction 4-CDP-2-C-methyl-D-erythritol 2-phosphate = 2-C-methyl-D-erythritol 2,4-cyclic diphosphate + CMP. It functions in the pathway isoprenoid biosynthesis; isopentenyl diphosphate biosynthesis via DXP pathway; isopentenyl diphosphate from 1-deoxy-D-xylulose 5-phosphate: step 4/6. Functionally, involved in the biosynthesis of isopentenyl diphosphate (IPP) and dimethylallyl diphosphate (DMAPP), two major building blocks of isoprenoid compounds. Catalyzes the conversion of 4-diphosphocytidyl-2-C-methyl-D-erythritol 2-phosphate (CDP-ME2P) to 2-C-methyl-D-erythritol 2,4-cyclodiphosphate (ME-CPP) with a corresponding release of cytidine 5-monophosphate (CMP). The protein is 2-C-methyl-D-erythritol 2,4-cyclodiphosphate synthase of Lachnospira eligens (strain ATCC 27750 / DSM 3376 / VPI C15-48 / C15-B4) (Eubacterium eligens).